A 553-amino-acid chain; its full sequence is Pumilio domain-containing protein 5 (553 aa).

8 Pumilio repeats span residues 146–184 (DVVS…VLFD), 185–223 (KLTE…RLVR), 224–260 (KMCD…KLVE), 261–296 (KISS…SFFV), 297–335 (KFLC…HCFN), 347–384 (SVAR…TIIE), 386–421 (CLLR…EMMD), and 432–472 (ETNR…KMVA). Positions 499 to 514 (FSSGKKIIESLQKLNV) are RNA-binding.

Detected in differentiating oocytes with highest levels observed in developing ooctyes in the distal portion of the proximal gonad.

It is found in the cytoplasm. The protein localises to the P-body. Its function is as follows. RNA-binding protein that binds to the consensus sequence 5'-CUCUGUAUCUUGU-3' in mRNA 3'-UTRs and modulates mRNA expression and stability. Functions redundantly with puf-6 and puf-7 in oocyte formation and organization, early embryonic cell divisions, and repression of expression of glp-1 and other maternal mRNAs in late oogenesis. This chain is Pumilio domain-containing protein 5, found in Caenorhabditis elegans.